The following is a 173-amino-acid chain: Co-chaperone protein HscB homolog (173 aa).

The J domain maps to 5–77 (SHFALFDLEP…SQRARYLLSL (73 aa)).

It belongs to the HscB family. Interacts with HscA and stimulates its ATPase activity.

In terms of biological role, co-chaperone involved in the maturation of iron-sulfur cluster-containing proteins. Seems to help targeting proteins to be folded toward HscA. The chain is Co-chaperone protein HscB homolog from Azotobacter vinelandii (strain DJ / ATCC BAA-1303).